Reading from the N-terminus, the 222-residue chain is Thymidylate kinase (222 aa).

Residue 7–14 coordinates ATP; sequence GIDGAGKS.

Belongs to the thymidylate kinase family.

It catalyses the reaction dTMP + ATP = dTDP + ADP. Its function is as follows. Phosphorylation of dTMP to form dTDP in both de novo and salvage pathways of dTTP synthesis. This is Thymidylate kinase from Chlorobium chlorochromatii (strain CaD3).